A 452-amino-acid chain; its full sequence is Gastrin/cholecystokinin type B receptor (452 aa).

Over 1 to 57 the chain is Extracellular; that stretch reads MELLKLNRSLPGPGPGAALCRPEGPLLNGSGAGNLSCEPPRIRGAGTRELELAVRIT. Residues asparagine 7, asparagine 28, and asparagine 34 are each glycosylated (N-linked (GlcNAc...) asparagine). A helical membrane pass occupies residues 58–78; that stretch reads LYAAIFLMSVAGNVLIIVVLG. Over 79-99 the chain is Cytoplasmic; sequence LSRRLRTVTNAFLLSLAVSDL. A helical transmembrane segment spans residues 100–120; that stretch reads LLAVACMPFTLLPNLMGTFIF. Topologically, residues 121 to 127 are extracellular; it reads GTVVCKA. A disulfide bridge connects residues cysteine 125 and cysteine 203. The helical transmembrane segment at 128–148 threads the bilayer; that stretch reads VSYFMGVSVSVSTLSLVAIAL. Topologically, residues 149-171 are cytoplasmic; the sequence is ERYSAICRPLQARVWQTRSHAAR. Residues 172–192 traverse the membrane as a helical segment; sequence VIVATWMLSGLLMVPYPVYTA. At 193-218 the chain is on the extracellular side; that stretch reads VQPAGPRVLQCMHRWPSARIRQTWSV. The helical transmembrane segment at 219-239 threads the bilayer; it reads LLLLLLFFVPGVVMAVAYGLI. At 240 to 339 the chain is on the cytoplasmic side; that stretch reads SRELYLGLRF…LLAKKRVVRM (100 aa). Positions 256–285 are disordered; the sequence is ESQSQVGSQGGLPGGAGQGPAHPNGHCRSE. Residues 263–273 are compositionally biased toward gly residues; it reads SQGGLPGGAGQ. The helical transmembrane segment at 340 to 360 threads the bilayer; sequence LLVIVVLFFLCWLPVYSANTW. Residues 361–376 lie on the Extracellular side of the membrane; that stretch reads RAFDGPGAHRALSGAP. Residues 377 to 397 form a helical membrane-spanning segment; the sequence is ISFIHLLSYASACVNPLVYCF. At 398-452 the chain is on the cytoplasmic side; it reads MHRRFRQACLDTCARCCPRPPRARPRPLPDEDPPTPSIASLSRLSYTTISTLGPG. Cysteine 413 carries the S-palmitoyl cysteine lipid modification.

Belongs to the G-protein coupled receptor 1 family.

It is found in the cell membrane. Functionally, receptor for gastrin and cholecystokinin. The CCK-B receptors occur throughout the central nervous system where they modulate anxiety, analgesia, arousal, and neuroleptic activity. This receptor mediates its action by association with G proteins that activate a phosphatidylinositol-calcium second messenger system. The sequence is that of Gastrin/cholecystokinin type B receptor from Sus scrofa (Pig).